Reading from the N-terminus, the 151-residue chain is Acidic phospholipase A2 1 (151 aa).

Positions 1 to 27 (MYPAHLLVLLAVCVSLLGAASIPARPL) are cleaved as a signal peptide. 7 disulfide bridges follow: C38–C104, C54–C151, C56–C72, C71–C132, C78–C125, C88–C118, and C111–C123. Ca(2+)-binding residues include Y55, G57, and G59. H75 is a catalytic residue. Residue D76 coordinates Ca(2+). Residue D126 is part of the active site.

It belongs to the phospholipase A2 family. Group I subfamily. D49 sub-subfamily. Ca(2+) serves as cofactor. Expressed by the venom gland.

Its subcellular location is the secreted. The catalysed reaction is a 1,2-diacyl-sn-glycero-3-phosphocholine + H2O = a 1-acyl-sn-glycero-3-phosphocholine + a fatty acid + H(+). PLA2 catalyzes the calcium-dependent hydrolysis of the 2-acyl groups in 3-sn-phosphoglycerides. In Tropidechis carinatus (Australian rough-scaled snake), this protein is Acidic phospholipase A2 1.